The sequence spans 217 residues: Somatotropin (217 aa).

Residues 1–26 (MAAGSRTSLLLAFALLCLPWLQEGSA) form the signal peptide. A Zn(2+)-binding site is contributed by histidine 44. The cysteines at positions 79 and 191 are disulfide-linked. At serine 132 the chain carries Phosphoserine. Zn(2+) is bound at residue glutamate 200. A disulfide bridge connects residues cysteine 208 and cysteine 215.

It belongs to the somatotropin/prolactin family.

It is found in the secreted. Its function is as follows. Plays an important role in growth control. Its major role in stimulating body growth is to stimulate the liver and other tissues to secrete IGF1. It stimulates both the differentiation and proliferation of myoblasts. It also stimulates amino acid uptake and protein synthesis in muscle and other tissues. The polypeptide is Somatotropin (GH1) (Macaca mulatta (Rhesus macaque)).